Consider the following 473-residue polypeptide: Photosystem II CP43 reaction center protein (473 aa).

Residues 1–14 (MKTLYSLRRYYPVE) constitute a propeptide that is removed on maturation. Position 15 is an N-acetylthreonine (Thr15). The residue at position 15 (Thr15) is a Phosphothreonine. 5 helical membrane-spanning segments follow: residues 69 to 93 (LFEV…PHLA), 134 to 155 (LIGP…KDKN), 178 to 200 (KASF…REIT), 255 to 275 (KPFA…LSYS), and 291 to 312 (WFNN…ASQA). Glu367 is a [CaMn4O5] cluster binding site. A helical transmembrane segment spans residues 447 to 471 (RARAAAAGFEKGIDRDSEPVLSMTP).

This sequence belongs to the PsbB/PsbC family. PsbC subfamily. As to quaternary structure, PSII is composed of 1 copy each of membrane proteins PsbA, PsbB, PsbC, PsbD, PsbE, PsbF, PsbH, PsbI, PsbJ, PsbK, PsbL, PsbM, PsbT, PsbX, PsbY, PsbZ, Psb30/Ycf12, at least 3 peripheral proteins of the oxygen-evolving complex and a large number of cofactors. It forms dimeric complexes. It depends on Binds multiple chlorophylls and provides some of the ligands for the Ca-4Mn-5O cluster of the oxygen-evolving complex. It may also provide a ligand for a Cl- that is required for oxygen evolution. PSII binds additional chlorophylls, carotenoids and specific lipids. as a cofactor.

It is found in the plastid. The protein resides in the chloroplast thylakoid membrane. One of the components of the core complex of photosystem II (PSII). It binds chlorophyll and helps catalyze the primary light-induced photochemical processes of PSII. PSII is a light-driven water:plastoquinone oxidoreductase, using light energy to abstract electrons from H(2)O, generating O(2) and a proton gradient subsequently used for ATP formation. This is Photosystem II CP43 reaction center protein from Anthoceros angustus (Hornwort).